Consider the following 221-residue polypeptide: GTP cyclohydrolase 1 (221 aa).

Zn(2+) is bound by residues cysteine 109, histidine 112, and cysteine 180.

Belongs to the GTP cyclohydrolase I family. In terms of assembly, toroid-shaped homodecamer, composed of two pentamers of five dimers.

The enzyme catalyses GTP + H2O = 7,8-dihydroneopterin 3'-triphosphate + formate + H(+). It functions in the pathway cofactor biosynthesis; 7,8-dihydroneopterin triphosphate biosynthesis; 7,8-dihydroneopterin triphosphate from GTP: step 1/1. This is GTP cyclohydrolase 1 from Sodalis glossinidius (strain morsitans).